A 193-amino-acid chain; its full sequence is Putative 3-methyladenine DNA glycosylase (193 aa).

It belongs to the DNA glycosylase MPG family.

This is Putative 3-methyladenine DNA glycosylase from Francisella tularensis subsp. holarctica (strain FTNF002-00 / FTA).